Reading from the N-terminus, the 526-residue chain is Amine oxidase [flavin-containing] A (526 aa).

M1 bears the N-acetylmethionine mark. The Cytoplasmic segment spans residues 1–497; sequence MTDLEKPNLA…HTFLERNLPS (497 aa). Residue S383 is modified to Phosphoserine. C406 is subject to S-8alpha-FAD cysteine. Residues 498 to 518 form a helical; Anchor for type IV membrane protein membrane-spanning segment; sequence VPGLLKITGVSTSVALLCFVL. Residues 519–526 lie on the Mitochondrial intermembrane side of the membrane; that stretch reads YKIKKLPC. Residues 520-522 are interaction with membrane phospholipid headgroups; sequence KIK.

The protein belongs to the flavin monoamine oxidase family. As to quaternary structure, monomer, homo- or heterodimer (containing two subunits of similar size). Each subunit contains a covalently bound flavin. Enzymatically active as monomer. It depends on FAD as a cofactor.

The protein resides in the mitochondrion outer membrane. The enzyme catalyses a secondary aliphatic amine + O2 + H2O = a primary amine + an aldehyde + H2O2. It catalyses the reaction a primary methyl amine + O2 + H2O = an aldehyde + H2O2 + NH4(+). The catalysed reaction is (R)-adrenaline + O2 + H2O = (R)-3,4-dihydroxymandelaldehyde + methylamine + H2O2. It carries out the reaction dopamine + O2 + H2O = 3,4-dihydroxyphenylacetaldehyde + H2O2 + NH4(+). The enzyme catalyses tyramine + O2 + H2O = (4-hydroxyphenyl)acetaldehyde + H2O2 + NH4(+). It catalyses the reaction (R)-noradrenaline + O2 + H2O = (R)-3,4-dihydroxymandelaldehyde + H2O2 + NH4(+). The catalysed reaction is serotonin + O2 + H2O = (5-hydroxyindol-3-yl)acetaldehyde + H2O2 + NH4(+). It carries out the reaction kynuramine + O2 + H2O = 3-(2-aminophenyl)-3-oxopropanal + H2O2 + NH4(+). The enzyme catalyses tryptamine + O2 + H2O = indole-3-acetaldehyde + H2O2 + NH4(+). It catalyses the reaction 2-phenylethylamine + O2 + H2O = 2-phenylacetaldehyde + H2O2 + NH4(+). Functionally, catalyzes the oxidative deamination of primary and some secondary amine such as neurotransmitters, with concomitant reduction of oxygen to hydrogen peroxide and has important functions in the metabolism of neuroactive and vasoactive amines in the central nervous system and peripheral tissues. Preferentially oxidizes serotonin. Also catalyzes the oxidative deamination of kynuramine to 3-(2-aminophenyl)-3-oxopropanal that can spontaneously condense to 4-hydroxyquinoline. In Rattus norvegicus (Rat), this protein is Amine oxidase [flavin-containing] A.